The sequence spans 338 residues: Lipoate-protein ligase A (338 aa).

In terms of domain architecture, BPL/LPL catalytic spans 29-216 (PATQRVLFLW…AFFAHYGERV (188 aa)). Residues arginine 71, 76–79 (GAVF), and lysine 134 contribute to the ATP site. A (R)-lipoate-binding site is contributed by lysine 134.

It belongs to the LplA family. Monomer.

The protein localises to the cytoplasm. It carries out the reaction L-lysyl-[lipoyl-carrier protein] + (R)-lipoate + ATP = N(6)-[(R)-lipoyl]-L-lysyl-[lipoyl-carrier protein] + AMP + diphosphate + H(+). The protein operates within protein modification; protein lipoylation via exogenous pathway; protein N(6)-(lipoyl)lysine from lipoate: step 1/2. It participates in protein modification; protein lipoylation via exogenous pathway; protein N(6)-(lipoyl)lysine from lipoate: step 2/2. Its function is as follows. Catalyzes both the ATP-dependent activation of exogenously supplied lipoate to lipoyl-AMP and the transfer of the activated lipoyl onto the lipoyl domains of lipoate-dependent enzymes. The protein is Lipoate-protein ligase A of Salmonella agona (strain SL483).